Reading from the N-terminus, the 449-residue chain is Glucose-6-phosphate isomerase (449 aa).

Residue Glu291 is the Proton donor of the active site. Active-site residues include His312 and Lys426.

It belongs to the GPI family.

It is found in the cytoplasm. It catalyses the reaction alpha-D-glucose 6-phosphate = beta-D-fructose 6-phosphate. It functions in the pathway carbohydrate biosynthesis; gluconeogenesis. Its pathway is carbohydrate degradation; glycolysis; D-glyceraldehyde 3-phosphate and glycerone phosphate from D-glucose: step 2/4. Catalyzes the reversible isomerization of glucose-6-phosphate to fructose-6-phosphate. The protein is Glucose-6-phosphate isomerase of Streptococcus pyogenes serotype M28 (strain MGAS6180).